Here is a 729-residue protein sequence, read N- to C-terminus: Putative cyclic nucleotide-gated ion channel 19 (729 aa).

Topologically, residues 1-172 are cytoplasmic; sequence MAHTRTFTSR…SKFVQVWTRV (172 aa). Residues 52 to 82 form a disordered region; that stretch reads SGPIHSTRRTEPLFSPSPQESPDSSSTVDVP. Positions 67–81 are enriched in low complexity; it reads PSPQESPDSSSTVDV. A helical transmembrane segment spans residues 173 to 193; the sequence is LAFSSLVAIFIDPLFFFLLLI. Over 194–208 the chain is Extracellular; that stretch reads QQDNKCIAIDWRATK. Residues 209-229 form a helical membrane-spanning segment; it reads VLVSLRSITDLIFFINILLQF. Residues 230-261 are Cytoplasmic-facing; it reads RLAYVAPESRIVGAGQLVDHPRKIARHYFRGK. A helical membrane pass occupies residues 262-282; that stretch reads FLLDMFIVFPIPQIMILRIIP. The Extracellular segment spans residues 283–295; sequence LHLGTRREESEKQ. A helical membrane pass occupies residues 296–316; it reads ILRATVLFQYIPKLYRLLPLL. Residues 317–332 lie on the Cytoplasmic side of the membrane; the sequence is AGQTSTGFIFESAWAN. Residues 333–353 form a helical membrane-spanning segment; it reads FVINLLTFMLAGHAVGSCWYL. Topologically, residues 354-451 are extracellular; the sequence is SALQRVKKCM…STLAGNLSPS (98 aa). Residues 452–472 traverse the membrane as a helical segment; sequence YSVGEVFFTMGIIGLGLLLFA. The Cytoplasmic segment spans residues 473 to 729; that stretch reads RLIGNMHNFL…LNTAHSNSNR (257 aa). A nucleoside 3',5'-cyclic phosphate is bound by residues 560-677 and Glu625; that span reads IFSL…VTSL. The interval 678–694 is calmodulin-binding; sequence FSRFLRSHRVQGAIRYE. The region spanning 699 to 728 is the IQ domain; it reads RLRAAMQIQVAWRYRKRQLQRLNTAHSNSN.

This sequence belongs to the cyclic nucleotide-gated cation channel (TC 1.A.1.5) family. Homotetramer or heterotetramer.

It localises to the cell membrane. Its function is as follows. Putative cyclic nucleotide-gated ion channel. The sequence is that of Putative cyclic nucleotide-gated ion channel 19 (CNGC19) from Arabidopsis thaliana (Mouse-ear cress).